The sequence spans 500 residues: Plexin domain-containing protein 1 (500 aa).

Positions 1-18 (MRGELWLLVLVLREAARA) are cleaved as a signal peptide. The Extracellular portion of the chain corresponds to 19–426 (LSPQPGAGHD…TKGTPVHLGT (408 aa)). Disordered regions lie at residues 20–39 (SPQP…AAKG) and 46–78 (RRAR…DTLP). Residue Ser-33 is glycosylated (O-linked (Xyl...) (chondroitin sulfate) serine). Basic and acidic residues predominate over residues 47 to 60 (RARESPGHVSEPDR). Residues Asn-80 and Asn-197 are each glycosylated (N-linked (GlcNAc...) asparagine). The tract at residues 359 to 379 (FQDEDHDSASPDTSFSPYDGD) is disordered. The segment covering 368 to 379 (SPDTSFSPYDGD) has biased composition (polar residues). A helical transmembrane segment spans residues 427–447 (IVGIVLAVLLVAAIILAGIYI). Residues 448–500 (NGHPTSNAALFFIERRPHHWPAMKFRSHPDHSTYAEVEPSGHEKEGFMEAEQC) lie on the Cytoplasmic side of the membrane. Residues 479-494 (STYAEVEPSGHEKEGF) show a composition bias toward basic and acidic residues. The disordered stretch occupies residues 479-500 (STYAEVEPSGHEKEGFMEAEQC).

It belongs to the plexin family. As to quaternary structure, interacts with NID1. May interact with CTTN. In terms of processing, N-glycosylated. In terms of tissue distribution, detected in urine (at protein level). Detected in endothelial cells from colorectal cancer, and in endothelial cells from primary cancers of the lung, liver, pancreas, breast and brain. Not detectable in endothelial cells from normal tissue. Expressed in fibrovascular membrane with increased expression in individuals with proliferative diabetic retinopathy.

Its subcellular location is the secreted. The protein resides in the cell membrane. It localises to the cell junction. The protein localises to the tight junction. It is found in the cytoplasm. In terms of biological role, plays a critical role in endothelial cell capillary morphogenesis. The chain is Plexin domain-containing protein 1 (PLXDC1) from Homo sapiens (Human).